Here is a 225-residue protein sequence, read N- to C-terminus: Cytidylate kinase (225 aa).

An ATP-binding site is contributed by 10-18 (GPASSGKST).

It belongs to the cytidylate kinase family. Type 1 subfamily.

The protein resides in the cytoplasm. It carries out the reaction CMP + ATP = CDP + ADP. It catalyses the reaction dCMP + ATP = dCDP + ADP. This is Cytidylate kinase from Streptococcus sanguinis (strain SK36).